Consider the following 355-residue polypeptide: Fe-S cluster assembly protein DRE2 (355 aa).

The tract at residues 23–156 (TSFNPRTLLL…KPDYSASVAV (134 aa)) is N-terminal SAM-like domain. The linker stretch occupies residues 157-247 (PLRLRRKDNS…EDTLLTEEDM (91 aa)). Residues 189-214 (RKSVDMTDDVPEKDVPKVDSPKNDAP) form a disordered region. Basic and acidic residues predominate over residues 190–213 (KSVDMTDDVPEKDVPKVDSPKNDA). Residues cysteine 257, cysteine 268, cysteine 271, and cysteine 273 each coordinate [2Fe-2S] cluster. The fe-S binding site A stretch occupies residues 257–273 (CAPRAGKRRRACKDCTC). Residues cysteine 318, cysteine 321, cysteine 329, and cysteine 332 each coordinate [4Fe-4S] cluster. 2 short sequence motifs (cx2C motif) span residues 318-321 (CGNC) and 329-332 (CDGC). The interval 318–332 (CGNCSLGDAFRCDGC) is fe-S binding site B.

Belongs to the anamorsin family. Monomer. Interacts with TAH18. Interacts with MIA40. The cofactor is [2Fe-2S] cluster. It depends on [4Fe-4S] cluster as a cofactor.

The protein localises to the cytoplasm. It is found in the mitochondrion intermembrane space. In terms of biological role, component of the cytosolic iron-sulfur (Fe-S) protein assembly (CIA) machinery required for the maturation of extramitochondrial Fe-S proteins. Part of an electron transfer chain functioning in an early step of cytosolic Fe-S biogenesis, facilitating the de novo assembly of a [4Fe-4S] cluster on the scaffold complex CFD1-NBP35. Electrons are transferred to DRE2 from NADPH via the FAD- and FMN-containing protein TAH18. TAH18-DRE2 are also required for the assembly of the diferric tyrosyl radical cofactor of ribonucleotide reductase (RNR), probably by providing electrons for reduction during radical cofactor maturation in the catalytic small subunit RNR2. The protein is Fe-S cluster assembly protein DRE2 of Botryotinia fuckeliana (strain B05.10) (Noble rot fungus).